Reading from the N-terminus, the 301-residue chain is Triplex capsid protein 2 (301 aa).

The protein belongs to the herpesviridae TRX2 protein family. In terms of assembly, interacts with TRX1 and major capisd protein/MCP.

The protein resides in the virion. It is found in the host nucleus. Functionally, structural component of the T=16 icosahedral capsid. The capsid is composed of pentamers and hexamers of major capsid protein/MCP, which are linked together by heterotrimers called triplexes. These triplexes are formed by a single molecule of triplex protein 1/TRX1 and two copies of triplex protein 2/TRX2. Additionally, TRX1 is required for efficient transport of TRX2 to the nucleus, which is the site of capsid assembly. This is Triplex capsid protein 2 from Homo sapiens (Human).